The sequence spans 659 residues: Siderophore transporter fer7 (659 aa).

The disordered stretch occupies residues 1-62 (MSNQAQDQPE…ADASSAREGQ (62 aa)). The segment covering 31–41 (QSVSAHGNTSL) has biased composition (polar residues). Asparagine 38 is a glycosylation site (N-linked (GlcNAc...) asparagine). A compositionally biased stretch (basic and acidic residues) spans 42–54 (NKKDRVSAVRDAD). 8 helical membrane-spanning segments follow: residues 79-99 (NSPI…CFAL), 121-141 (LFGV…PFIA), 150-170 (QTAY…VASA), 208-228 (GVVT…GNLI), 245-265 (GMFA…LMYV), 316-336 (LVGL…FSIY), 348-368 (IIAM…WEIL), and 379-399 (VWYN…FMGG). Residue asparagine 415 is glycosylated (N-linked (GlcNAc...) asparagine). 2 consecutive transmembrane segments (helical) span residues 424–444 (VVNA…GFYL) and 451–471 (KFLQ…YLYG). The N-linked (GlcNAc...) asparagine glycan is linked to asparagine 475. The next 3 helical transmembrane spans lie at 478–498 (TMVV…SVVG), 528–548 (AIGS…YLAA), and 590–610 (PIFI…LLMP).

It belongs to the major facilitator superfamily.

The protein localises to the membrane. Siderophore transporter; part of the gene cluster that mediates the biosynthesis of siderophore ferrichrome A which is contributing to organismal virulence. This chain is Siderophore transporter fer7, found in Mycosarcoma maydis (Corn smut fungus).